Here is a 314-residue protein sequence, read N- to C-terminus: Ribosomal RNA small subunit methyltransferase H (314 aa).

Residues 58 to 60 (GGH), Asp-76, Phe-103, Asp-119, and Gln-126 each bind S-adenosyl-L-methionine.

This sequence belongs to the methyltransferase superfamily. RsmH family.

The protein localises to the cytoplasm. The enzyme catalyses cytidine(1402) in 16S rRNA + S-adenosyl-L-methionine = N(4)-methylcytidine(1402) in 16S rRNA + S-adenosyl-L-homocysteine + H(+). In terms of biological role, specifically methylates the N4 position of cytidine in position 1402 (C1402) of 16S rRNA. This chain is Ribosomal RNA small subunit methyltransferase H, found in Gloeobacter violaceus (strain ATCC 29082 / PCC 7421).